The chain runs to 433 residues: 3-phosphoshikimate 1-carboxyvinyltransferase (433 aa).

3-phosphoshikimate-binding residues include K23, S24, and R28. K23 serves as a coordination point for phosphoenolpyruvate. Residues G95 and R123 each contribute to the phosphoenolpyruvate site. Residues S167, Q169, D317, and K344 each coordinate 3-phosphoshikimate. Q169 contacts phosphoenolpyruvate. D317 (proton acceptor) is an active-site residue. Residues R348 and R390 each coordinate phosphoenolpyruvate.

The protein belongs to the EPSP synthase family. As to quaternary structure, monomer.

It localises to the cytoplasm. The enzyme catalyses 3-phosphoshikimate + phosphoenolpyruvate = 5-O-(1-carboxyvinyl)-3-phosphoshikimate + phosphate. Its pathway is metabolic intermediate biosynthesis; chorismate biosynthesis; chorismate from D-erythrose 4-phosphate and phosphoenolpyruvate: step 6/7. Catalyzes the transfer of the enolpyruvyl moiety of phosphoenolpyruvate (PEP) to the 5-hydroxyl of shikimate-3-phosphate (S3P) to produce enolpyruvyl shikimate-3-phosphate and inorganic phosphate. This is 3-phosphoshikimate 1-carboxyvinyltransferase from Staphylococcus epidermidis (strain ATCC 35984 / DSM 28319 / BCRC 17069 / CCUG 31568 / BM 3577 / RP62A).